The following is a 341-amino-acid chain: MQEELKELKEKALVDISEASSLDKLKDVQVKYLGKKGELTKILRGMGNLSPEERPVVGKLANEIRDDLEQAFEERENNLKEAEMQKRWEEEKIDVTLPGRVISRGAKHPLKKVLDEVHDIFLGMGYNIEEGPEIETDYYNFEALNIPKGHPAREMQDSLYITEEILLRTHTSPVQIRTMEQVAPEIPVRIICTGKVYRKDDDATHSPMFHQIEGLVVGERITLGDLKGTLLNFAKQMFGPEVDIRLRPSYFPFTEPSAEVDISCVICEGSGCRVCKGTGWLEILGSGMVHPKVFEMSGYDPDKVTGFAFGMGVERIAMLKYGIQDLRIFFENDKRMVNQFK.

Glutamate 255 provides a ligand contact to Mg(2+).

It belongs to the class-II aminoacyl-tRNA synthetase family. Phe-tRNA synthetase alpha subunit type 1 subfamily. As to quaternary structure, tetramer of two alpha and two beta subunits. Requires Mg(2+) as cofactor.

It is found in the cytoplasm. The catalysed reaction is tRNA(Phe) + L-phenylalanine + ATP = L-phenylalanyl-tRNA(Phe) + AMP + diphosphate + H(+). The sequence is that of Phenylalanine--tRNA ligase alpha subunit from Natranaerobius thermophilus (strain ATCC BAA-1301 / DSM 18059 / JW/NM-WN-LF).